The chain runs to 679 residues: MHILTPTQAPLVPNPPHELMYTSSPLQISLPDFRRLCIFKGIYPPREPRNKKKVSKGSTAATTFYYTKDIQYLLHEPLLAKFREHKAVAKKIGRALGRGESGDASRLEKNLMPKVKLDHIIKERYPTFVDALRDLDDALSMLFLFANLPSSDHIPAKTIALCQRLTREFEHYVITSHSLRKSFLSIKGIYYQATIQGQDILWLVPYRFVQRTGGDIDFRIMGTFVEFYTTLLGFVNYRLYTSIGLVYPPKFNARSDEQGGELAAFQLEGKATATNGASNGHAEDAEINPEAQAIADRIGAMPDVEEEEATTAVAKTGAEDDEEEANEEIDKFEPTAPDADILPQPQASSAEVASLFAPFTFYLSRETPRGSLEFILKAFGCKRVGWDGVLGDGAFTTNESDPAITHQIVDRPALSNGAPASNVQETENGGAAAPKAQWPYSMMPGRTYVQPQWVWDSINQGKLLRADHYSPGADLPPHLSPWVKPKKGEYDPNLPLAAQQPEGEAEAFEDEGDEETAFDVDGDEDMEAIVDREGSVEVGEGMDVADDSEDDSDDDESDEEDGPAGDEDDLDSDAESDISEGEAARLQHQRELEAEATGKKLEVKKPTRKEENATIRKKAEKKKRAEEEERERQKMMLSNKKRKLLKRIEYGENKRDNESENLRRKRARVEKAKAAAEAV.

The BRCT domain maps to 351–471 (EVASLFAPFT…KLLRADHYSP (121 aa)). Disordered stretches follow at residues 413–437 (ALSNGAPASNVQETENGGAAAPKAQ) and 480–679 (SPWV…AEAV). Polar residues predominate over residues 418–427 (APASNVQETE). Acidic residues-rich tracts occupy residues 503-528 (GEAEAFEDEGDEETAFDVDGDEDMEA) and 543-580 (DVADDSEDDSDDDESDEEDGPAGDEDDLDSDAESDISE). Residues 573 to 679 (DAESDISEGE…EKAKAAAEAV (107 aa)) are a coiled coil. Basic and acidic residues-rich tracts occupy residues 582-614 (EAARLQHQRELEAEATGKKLEVKKPTRKEENAT), 623-634 (KRAEEEERERQK), 646-662 (KRIEYGENKRDNESENL), and 669-679 (VEKAKAAAEAV).

This sequence belongs to the pescadillo family. As to quaternary structure, component of the NOP7 complex, composed of erb1, nop7 and ytm1. The complex is held together by erb1, which interacts with nop7 via its N-terminal domain and with ytm1 via a high-affinity interaction between the seven-bladed beta-propeller domains of the 2 proteins. The NOP7 complex associates with the 66S pre-ribosome.

It localises to the nucleus. It is found in the nucleolus. Its subcellular location is the nucleoplasm. Component of the NOP7 complex, which is required for maturation of the 25S and 5.8S ribosomal RNAs and formation of the 60S ribosome. The sequence is that of Pescadillo homolog (nop7) from Pyrenophora tritici-repentis (strain Pt-1C-BFP) (Wheat tan spot fungus).